The chain runs to 209 residues: Geminin (209 aa).

The tract at residues 1-79 is disordered; sequence MNPSMKQKQE…PESSENKNLG (79 aa). A compositionally biased stretch (basic and acidic residues) spans 7 to 16; the sequence is QKQEEIKENI. N6-acetyllysine is present on Lys27. Ser34, Ser36, Ser49, Ser63, and Ser64 each carry phosphoserine. The tract at residues 82-161 is necessary and sufficient for interaction with IDAS and CDT1; that stretch reads TQESFDLMIK…AELIERLNGE (80 aa). Residues 94-144 are a coiled coil; the sequence is PSSQYWKEVAEKRRKALYEALKENEKLHKEIEQKDNEIARLKKENKELAEV. The disordered stretch occupies residues 164 to 209; that stretch reads DNFESLDNQEFDSEEETVEDSLVEDSEIGTCAEGTVSSSTDAKPCI. A homeodomain binding region spans residues 170 to 190; it reads DNQEFDSEEETVEDSLVEDSE. Residues 170–190 show a composition bias toward acidic residues; the sequence is DNQEFDSEEETVEDSLVEDSE. The residue at position 184 (Ser184) is a Phosphoserine; by CK2. A compositionally biased stretch (polar residues) spans 198–209; sequence TVSSSTDAKPCI.

It belongs to the geminin family. In terms of assembly, homotetramer. Interacts with CDT1; this inhibits binding of the MCM complex to origins of replication. The complex with CDT1 exists in two forms, a 'permissive' heterotrimer and an 'inhibitory' heterohexamer. Interacts (via coiled-coil domain) with IDAS (via coiled-coil domain); this targets GMNN to the nucleus. The heterodimer formed by GMNN and MCIDAS has much lower affinity for CDT1 than the GMNN homodimer. Interacts with a subset of Hox proteins, affinity increasing from anterior to posterior types, the strongest interaction being with HOXB1, HOXC9 and HOXD10. Interacts with LRWD1 from G1/S to mitosis. Post-translationally, phosphorylated during mitosis. Phosphorylation at Ser-184 by CK2 results in enhanced binding to Hox proteins and more potent inhibitory effect on Hox transcriptional activity.

The protein resides in the cytoplasm. The protein localises to the nucleus. In terms of biological role, inhibits DNA replication by preventing the incorporation of MCM complex into pre-replication complex (pre-RC). It is degraded during the mitotic phase of the cell cycle. Its destruction at the metaphase-anaphase transition permits replication in the succeeding cell cycle. Inhibits histone acetyltransferase activity of KAT7/HBO1 in a CDT1-dependent manner, inhibiting histone H4 acetylation and DNA replication licensing. Inhibits the transcriptional activity of a subset of Hox proteins, enrolling them in cell proliferative control. This chain is Geminin (GMNN), found in Homo sapiens (Human).